Consider the following 449-residue polypeptide: Asparagine--tRNA ligase (449 aa).

Belongs to the class-II aminoacyl-tRNA synthetase family. As to quaternary structure, homodimer.

The protein resides in the cytoplasm. It catalyses the reaction tRNA(Asn) + L-asparagine + ATP = L-asparaginyl-tRNA(Asn) + AMP + diphosphate + H(+). This Mesomycoplasma hyopneumoniae (strain J / ATCC 25934 / NCTC 10110) (Mycoplasma hyopneumoniae) protein is Asparagine--tRNA ligase.